Consider the following 224-residue polypeptide: IAP-like protein p27 (224 aa).

The BIR repeat unit spans residues 29 to 92 (VDARNQSFAI…GFWSRNCGFM (64 aa)). Positions 62, 65, 82, and 89 each coordinate Zn(2+).

Not essential for growth or virulence. Does not have antiapoptotic function. The chain is IAP-like protein p27 (p27) from Ornithodoros (relapsing fever ticks).